A 251-amino-acid chain; its full sequence is Small ribosomal subunit protein uS3 (251 aa).

In terms of domain architecture, KH type-2 spans 39 to 109; the sequence is IRNYVLARLK…EVKIDVVEVI (71 aa). Positions 221–239 are enriched in basic and acidic residues; the sequence is EMKRMKDRRADSKSRPRDP. The interval 221-251 is disordered; the sequence is EMKRMKDRRADSKSRPRDPRSKRRRSRTKRA. Residues 240-251 show a composition bias toward basic residues; the sequence is RSKRRRSRTKRA.

Belongs to the universal ribosomal protein uS3 family. As to quaternary structure, part of the 30S ribosomal subunit. Forms a tight complex with proteins S10 and S14.

Binds the lower part of the 30S subunit head. Binds mRNA in the 70S ribosome, positioning it for translation. In Chlorobium limicola (strain DSM 245 / NBRC 103803 / 6330), this protein is Small ribosomal subunit protein uS3.